A 377-amino-acid polypeptide reads, in one-letter code: MSVLFTILLMAVIGGFIGAMTNYIAIRMLFRPYKAIYLFNKRLPFTPGLIPKRRDELAEHIGKVVVSHLLTEDAIRARLLDENLQKEITDTITKMFHEKMQLETTPNELLHHFGYENAEIRSMTWVEKTLEKEINHFLTTKKTTKMSDLIPTMLESELTTKLPHVTERITSKMTLFVSSEEGKIQIKQMLQKFFEEHGKMGSMARMFINIDSFSEKIQQEGLKLIGQEDTKNLINQLLTTEWKNFEAKELQELIPTEKQAHLAGQLTSELIQTFPHEKLFNQPIQVMLRGYEAAITEKVIPFAVERMLDFVATHSAEIVERMDLAKLVETQIATFSLPEIEKLVVEISGRELKMITYLGGILGGFIGIIQGVLAMWI.

Transmembrane regions (helical) follow at residues 1 to 21 (MSVL…GAMT) and 357 to 377 (YLGG…AMWI).

The protein belongs to the UPF0754 family.

The protein resides in the cell membrane. The polypeptide is UPF0754 membrane protein LMOf2365_2257 (Listeria monocytogenes serotype 4b (strain F2365)).